The sequence spans 234 residues: Demethylmenaquinone methyltransferase (234 aa).

Residues Thr-62, Asp-80, 100–101 (DA), and Ser-117 each bind S-adenosyl-L-methionine.

It belongs to the class I-like SAM-binding methyltransferase superfamily. MenG/UbiE family.

It catalyses the reaction a 2-demethylmenaquinol + S-adenosyl-L-methionine = a menaquinol + S-adenosyl-L-homocysteine + H(+). Its pathway is quinol/quinone metabolism; menaquinone biosynthesis; menaquinol from 1,4-dihydroxy-2-naphthoate: step 2/2. Functionally, methyltransferase required for the conversion of demethylmenaquinol (DMKH2) to menaquinol (MKH2). In Mycobacterium bovis (strain ATCC BAA-935 / AF2122/97), this protein is Demethylmenaquinone methyltransferase.